A 162-amino-acid chain; its full sequence is tRNA (cytidine(34)-2'-O)-methyltransferase (162 aa).

S-adenosyl-L-methionine contacts are provided by Leu80, Gly102, Leu124, and Ser132.

Belongs to the class IV-like SAM-binding methyltransferase superfamily. RNA methyltransferase TrmH family. TrmL subfamily. In terms of assembly, homodimer.

It is found in the cytoplasm. The catalysed reaction is cytidine(34) in tRNA + S-adenosyl-L-methionine = 2'-O-methylcytidine(34) in tRNA + S-adenosyl-L-homocysteine + H(+). The enzyme catalyses 5-carboxymethylaminomethyluridine(34) in tRNA(Leu) + S-adenosyl-L-methionine = 5-carboxymethylaminomethyl-2'-O-methyluridine(34) in tRNA(Leu) + S-adenosyl-L-homocysteine + H(+). Functionally, methylates the ribose at the nucleotide 34 wobble position in the two leucyl isoacceptors tRNA(Leu)(CmAA) and tRNA(Leu)(cmnm5UmAA). Catalyzes the methyl transfer from S-adenosyl-L-methionine to the 2'-OH of the wobble nucleotide. This Acidovorax sp. (strain JS42) protein is tRNA (cytidine(34)-2'-O)-methyltransferase.